Here is a 412-residue protein sequence, read N- to C-terminus: DNA primase DnaG (412 aa).

The Toprim domain maps to 165 to 243 (PELIIVEGRA…KLDYVARAPT (79 aa)). Residues Glu171, Asp216, and Asp218 each coordinate Mg(2+).

The protein belongs to the archaeal DnaG primase family. In terms of assembly, forms a ternary complex with MCM helicase and DNA. Component of the archaeal exosome complex. Requires Mg(2+) as cofactor.

It catalyses the reaction ssDNA + n NTP = ssDNA/pppN(pN)n-1 hybrid + (n-1) diphosphate.. Functionally, RNA polymerase that catalyzes the synthesis of short RNA molecules used as primers for DNA polymerase during DNA replication. Also part of the exosome, which is a complex involved in RNA degradation. Acts as a poly(A)-binding protein that enhances the interaction between heteromeric, adenine-rich transcripts and the exosome. In Sulfolobus acidocaldarius (strain ATCC 33909 / DSM 639 / JCM 8929 / NBRC 15157 / NCIMB 11770), this protein is DNA primase DnaG.